The primary structure comprises 495 residues: Sugar phosphate exchanger 3 (495 aa).

The helical transmembrane segment at 16–36 (FSHHHMVVFLLTFFSYSLLHA) threads the bilayer. Asn58 carries an N-linked (GlcNAc...) asparagine glycan. Helical transmembrane passes span 82 to 102 (TLFL…GLFI), 114 to 134 (WVLS…GTLT), 148 to 168 (LWIV…AVMG), 178 to 198 (VVFG…ACLA), and 210 to 230 (FLVT…GLLV). Asn267 carries an N-linked (GlcNAc...) asparagine glycan. The next 6 membrane-spanning stretches (helical) occupy residues 298 to 318 (LAYA…PFYL), 334 to 354 (IWYD…SDML), 358 to 378 (APVL…YSRS), 387 to 407 (LLMA…SSAI), 429 to 449 (GIVD…VSLI), and 453 to 473 (LGWM…VLFI).

Belongs to the major facilitator superfamily. Organophosphate:Pi antiporter (OPA) (TC 2.A.1.4) family. Interacts with ATRAID; the interaction is direct and both proteins are mutually dependent for their stability. Glycosylated.

The protein resides in the endoplasmic reticulum membrane. Its subcellular location is the lysosome membrane. In terms of biological role, unlike the other SLC37 members, lacks glucose-6-phosphate antiporter activity. In osteoclasts, forms a transporter complex with ATRAID for nitrogen-containing-bisphophonates (N-BPs) required for releasing N-BP molecules that have trafficked to lysosomes through fluid-phase endocytosis into the cytosol. In Bos taurus (Bovine), this protein is Sugar phosphate exchanger 3 (SLC37A3).